A 1419-amino-acid chain; its full sequence is DNA-directed RNA polymerase subunit beta' (1419 aa).

4 residues coordinate Zn(2+): cysteine 71, cysteine 73, cysteine 86, and cysteine 89. Residues aspartate 461, aspartate 463, and aspartate 465 each coordinate Mg(2+). Zn(2+) is bound by residues cysteine 815, cysteine 889, cysteine 896, and cysteine 899.

The protein belongs to the RNA polymerase beta' chain family. As to quaternary structure, the RNAP catalytic core consists of 2 alpha, 1 beta, 1 beta' and 1 omega subunit. When a sigma factor is associated with the core the holoenzyme is formed, which can initiate transcription. It depends on Mg(2+) as a cofactor. Zn(2+) is required as a cofactor.

The enzyme catalyses RNA(n) + a ribonucleoside 5'-triphosphate = RNA(n+1) + diphosphate. In terms of biological role, DNA-dependent RNA polymerase catalyzes the transcription of DNA into RNA using the four ribonucleoside triphosphates as substrates. The protein is DNA-directed RNA polymerase subunit beta' of Actinobacillus succinogenes (strain ATCC 55618 / DSM 22257 / CCUG 43843 / 130Z).